Here is a 782-residue protein sequence, read N- to C-terminus: E3 UFM1-protein ligase 1 homolog (782 aa).

The disordered stretch occupies residues 404-477; the sequence is NASTQELEDD…GSRGGGGVNK (74 aa). Basic residues predominate over residues 443–453; it reads KSTKKHQRGKA.

It belongs to the UFL1 family.

Functionally, E3 UFM1-protein ligase that mediates ufmylation of target proteins. The polypeptide is E3 UFM1-protein ligase 1 homolog (Drosophila erecta (Fruit fly)).